The chain runs to 256 residues: Geranylgeranylglyceryl phosphate synthase (256 aa).

2 residues coordinate Mg(2+): D28 and S53. Sn-glycerol 1-phosphate contacts are provided by residues 172–178 (YLEAGSG), 203–204 (GG), and 225–226 (GT).

The protein belongs to the GGGP/HepGP synthase family. Group II subfamily. The cofactor is Mg(2+).

Its subcellular location is the cytoplasm. It carries out the reaction sn-glycerol 1-phosphate + (2E,6E,10E)-geranylgeranyl diphosphate = sn-3-O-(geranylgeranyl)glycerol 1-phosphate + diphosphate. Its pathway is membrane lipid metabolism; glycerophospholipid metabolism. Prenyltransferase that catalyzes the transfer of the geranylgeranyl moiety of geranylgeranyl diphosphate (GGPP) to the C3 hydroxyl of sn-glycerol-1-phosphate (G1P). This reaction is the first ether-bond-formation step in the biosynthesis of archaeal membrane lipids. The polypeptide is Geranylgeranylglyceryl phosphate synthase (Methanococcus maripaludis (strain C6 / ATCC BAA-1332)).